Consider the following 219-residue polypeptide: Small ribosomal subunit protein uS2m (219 aa).

Belongs to the universal ribosomal protein uS2 family. As to quaternary structure, component of the mitochondrial ribosome small subunit.

The protein localises to the mitochondrion. In Arabidopsis thaliana (Mouse-ear cress), this protein is Small ribosomal subunit protein uS2m (RPS2).